A 1424-amino-acid chain; its full sequence is MPAPGALILLAAVSASGCLASPAHPDGFALSRAPLAPPYAVVLISCSGLLAFIFLLLTCLCCKRGDVRFKEFENPEGEDCSGEYTPPAEETSSSQSLPDVYILPLAEVSLPMPAPQPPHSDISTPLGLSRQHLSYLQEIGSGWFGKVILGEVFSDYSPAQVVVKELRASAGPLEQRKFISEAQPYRSLQHPNVLQCLGVCVETLPFLLIMEFCQLGDLKRYLRAQRPPEGMSPELPPRDLRTLQRMGLEIARGLAHLHSHNYVHSDLALRNCLLTSDLTVRIGDYGLAHSNYKEDYYLTPERLWVPLRWAAPELLGELHGSFVLVDQSRESNVWSLGVTLWELFEFGAQPYRHLSDEEVLAFVVRQQHVKLARPRLKLPYADYWYDILQSCWRPPAQRPSASDLQLQLTYLLSERPPRPPPPPPPPRDGPFPWPWPPSHSAPRPGTLSSQFPLLDGFPGADPDDVLTVTESSRGLNLECLWEKARRGAGRGGGAPPWQPASAPPAPHTNPSNPFYEALSTPSVLPVISARSPSVSSEYYIRLEEHGSPPEPLFPNDWDPLDPGVPGPQAPQTPSEVPQLVSETWASPLFPAPRPFPAQSSGSGGFLLSGWDPEGRGAGETLAGDPAEVLGEQGTAPWAEEEEEESSPGEDSSSLGGGPSRRGPLPCPLCSREGPCSCLPLERGDAVAGWGDHPALGCPHPPEDDSSLRAERGSLADLPLVPPTSAPLEFLDPLMGAAAPQYPGRGPPPAPPPPPPPPRASAEPAASPDPPSALASPGSGLSSPGPKPGDSGYETETPFSPEGAFPGGGAAKEEGVPRPRAPPEPPDPGAPRPPPDPGPLPLPGSQEKPTFVVQVSTEQLLMSLREDVTKNLLGDKGSTPGETGPRKAGRSPANREKGPGPNRDLTSLVSRKKVPSRSLPVNGVTVLENGKPGVPDMKEKVAENGLESPEKEERALVNGEPMSPEAGEKVLANGVLMSPKSEEKVAENGVLRLPRNTERPPEIGPRRVPGPWEKTPETGGLAPETLLDRAPAPCEAALPQNGLEMAPGQLGPAPKSGNPDPGTEWRVHESGGAPRAPGAGKLDLGSGGRALGGVGTAPAGGPASAVDAKAGWVDNSRPLPPPPQPLGAQQRRPEPVPLKARPEVAQEEEPGVPDNRLGGDMAPSVDEDPLKPERKGPEMPRLFLDLGPPQGNSEQIKAKLSRLSLALPPLTLTPFPGPGPRRPPWEGADAGAAGGEAGGAGAPGPAEEDGEDEDEDEEDEEAAGSRDPGRTREAPVPVVVSSADGDTVRPLRGLLKSPRAADEPEDSELERKRKMVSFHGDVTVYLFDQETPTNELSVQGTPEGDTEPSTPPAPPTPPHPTTPGDGFPNSDSGFGGSFEWAEDFPLLPPPGPPLCFSRFSVSPALETPGPPARAPDARPAGPVEN.

The first 20 residues, 1–20, serve as a signal peptide directing secretion; that stretch reads MPAPGALILLAAVSASGCLA. The chain crosses the membrane as a helical span at residues 40-60; it reads AVVLISCSGLLAFIFLLLTCL. The segment at 74–95 is disordered; the sequence is NPEGEDCSGEYTPPAEETSSSQ. One can recognise a Protein kinase domain in the interval 133–411; that stretch reads LSYLQEIGSG…SDLQLQLTYL (279 aa). ATP contacts are provided by residues 139–147 and Lys-164; that span reads IGSGWFGKV. Ser-232 is subject to Phosphoserine. Asp-266 acts as the Proton acceptor in catalysis. Disordered stretches follow at residues 413 to 465 and 486 to 516; these read SERP…PDDV and RGAGRGGGAPPWQPASAPPAPHTNPSNPFYE. Residues 418–439 are compositionally biased toward pro residues; the sequence is RPPPPPPPPRDGPFPWPWPPSH. Arg-490 is subject to Omega-N-methylarginine. Residues 496-507 are compositionally biased toward pro residues; that stretch reads PWQPASAPPAPH. 2 positions are modified to phosphoserine: Ser-531 and Ser-535. Disordered regions lie at residues 544–666, 680–964, 976–1024, 1041–1313, and 1325–1424; these read EHGS…PLPC, LERG…MSPE, MSPK…APET, GLEM…RKRK, and LFDQ…PVEN. Polar residues predominate over residues 571 to 584; sequence QTPSEVPQLVSETW. A compositionally biased stretch (acidic residues) spans 638–647; the sequence is AEEEEEESSP. Residues 700–713 show a composition bias toward basic and acidic residues; it reads PPEDDSSLRAERGS. The span at 744–758 shows a compositional bias: pro residues; that stretch reads RGPPPAPPPPPPPPR. The span at 759-791 shows a compositional bias: low complexity; the sequence is ASAEPAASPDPPSALASPGSGLSSPGPKPGDSG. Over residues 818 to 841 the composition is skewed to pro residues; sequence PRAPPEPPDPGAPRPPPDPGPLPL. The span at 935–954 shows a compositional bias: basic and acidic residues; it reads DMKEKVAENGLESPEKEERA. A phosphoserine mark is found at Ser-947, Ser-962, and Ser-977. Residues 994–1004 show a composition bias toward basic and acidic residues; that stretch reads RNTERPPEIGP. A compositionally biased stretch (gly residues) spans 1084–1094; sequence GSGGRALGGVG. The segment covering 1095 to 1105 has biased composition (low complexity); it reads TAPAGGPASAV. The segment covering 1167–1177 has biased composition (basic and acidic residues); that stretch reads DPLKPERKGPE. The segment covering 1200–1213 has biased composition (low complexity); it reads SRLSLALPPLTLTP. Residues 1231 to 1241 show a composition bias toward gly residues; sequence AAGGEAGGAGA. Acidic residues predominate over residues 1245–1261; that stretch reads AEEDGEDEDEDEEDEEA. The segment covering 1262–1272 has biased composition (basic and acidic residues); the sequence is AGSRDPGRTRE. The span at 1329–1339 shows a compositional bias: polar residues; the sequence is ETPTNELSVQG. The span at 1348-1360 shows a compositional bias: pro residues; the sequence is STPPAPPTPPHPT.

It belongs to the protein kinase superfamily. Tyr protein kinase family. In terms of assembly, interacts with ESR1. Interacts with AP-2 complex subunit alpha. Mg(2+) serves as cofactor. Post-translationally, autophosphorylated. As to expression, expressed in brain. Predominantly expressed in cerebral cortex, thalamus, the cerebellum and hippocampal formation (at protein level).

It localises to the membrane. The protein localises to the cell projection. Its subcellular location is the axon. It is found in the dendrite. The protein resides in the golgi apparatus membrane. It catalyses the reaction L-seryl-[protein] + ATP = O-phospho-L-seryl-[protein] + ADP + H(+). The catalysed reaction is L-threonyl-[protein] + ATP = O-phospho-L-threonyl-[protein] + ADP + H(+). Functionally, protein kinase which phosphorylates ESR1 (in vitro) and protects it against proteasomal degradation. May also regulate ESR1 levels indirectly via a PKC-AKT-FOXO3 pathway where it decreases the activity of PKC and the phosphorylation of AKT, thereby increasing binding of transcriptional activator FOXO3 to the ESR1 promoter and increasing ESR1 transcription. Involved in endocytic trafficking of N-methyl-D-aspartate receptors (NMDAR) in neurons. This Mus musculus (Mouse) protein is Serine/threonine-protein kinase LMTK3 (Lmtk3).